A 416-amino-acid chain; its full sequence is Chromate transport protein (416 aa).

Positions 1–21 (MSVANEESYRPSKATDATTEA) are disordered. 11 helical membrane passes run 99 to 119 (LGGVLAGLGFMLPGFLLMFAL), 128 to 148 (FVGTALGAAFLGVQAAVIALI), 160 to 177 (LLDRWLWVIAIVCALAAI), 181 to 198 (DFWITLPAGGLVYALLVL), 204 to 224 (ALLVTLAAVALAAAVALWAAP), 237 to 257 (ASVLLIFASGLKAGLLTFGGA), 283 to 303 (LALSGVLPAPLIIFATFVGYV), 308 to 328 (IGAVAMTVGVFLPAFAFSLIF), 341 to 361 (LHAFLDGVAAGVVGLIGATTI), 371 to 391 (VPSLTVGMSIFAAGLAFLYAW), and 395 to 415 (LNVVVVILAAGLAGWLVFPNQ).

The protein belongs to the chromate ion transporter (CHR) (TC 2.A.51) family.

The protein localises to the cell inner membrane. In terms of biological role, this protein reduces chromate accumulation and is essential for chromate resistance. The protein is Chromate transport protein of Pseudomonas aeruginosa.